The following is a 977-amino-acid chain: AP-2 complex subunit alpha-1 (977 aa).

Residues 614 to 702 (AKLKRKKGPG…PSLGPTPEEA (89 aa)) are disordered. Phosphoserine is present on residues Ser-626 and Ser-652. Low complexity predominate over residues 646-657 (PTPSTVSTPSPS). At Thr-653 the chain carries Phosphothreonine. Ser-655 bears the Phosphoserine mark. Pro residues predominate over residues 666-675 (APPPAAPPAP).

Belongs to the adaptor complexes large subunit family. In terms of assembly, adaptor protein complex 2 (AP-2) is a heterotetramer composed of two large adaptins (alpha-type subunit AP2A1 or AP2A2 and beta-type subunit AP2B1), a medium adaptin (mu-type subunit AP2M1) and a small adaptin (sigma-type subunit AP2S1). Interacts with HIP1 and RAB11FIP2. Interacts with SLC12A5. Interacts with clathrin. Interacts with SGIP1. Interacts with RFTN1. Interacts with KIAA1107. Interacts with PICALM. Together with AP2B1 and AP2M1, it interacts with ADAM10; this interaction facilitates ADAM10 endocytosis from the plasma membrane during long-term potentiation in hippocampal neurons. Interacts with ABCB11; this interaction regulates cell membrane expression of ABCB11 through its internalization in a clathrin-dependent manner and its subsequent degradation. Probably interacts with ACE2 (via endocytic sorting signal motif); the interaction is inhibited by ACE2 phosphorylation. In terms of tissue distribution, expressed in the brain (at protein level). Isoform A: Expressed only in neuronal tissue and skeletal muscle. Isoform B: Widely expressed.

It is found in the cell membrane. Its subcellular location is the membrane. The protein localises to the coated pit. Its function is as follows. Component of the adaptor protein complex 2 (AP-2). Adaptor protein complexes function in protein transport via transport vesicles in different membrane traffic pathways. Adaptor protein complexes are vesicle coat components and appear to be involved in cargo selection and vesicle formation. AP-2 is involved in clathrin-dependent endocytosis in which cargo proteins are incorporated into vesicles surrounded by clathrin (clathrin-coated vesicles, CCVs) which are destined for fusion with the early endosome. The clathrin lattice serves as a mechanical scaffold but is itself unable to bind directly to membrane components. Clathrin-associated adaptor protein (AP) complexes which can bind directly to both the clathrin lattice and to the lipid and protein components of membranes are considered to be the major clathrin adaptors contributing the CCV formation. AP-2 also serves as a cargo receptor to selectively sort the membrane proteins involved in receptor-mediated endocytosis. AP-2 seems to play a role in the recycling of synaptic vesicle membranes from the presynaptic surface. AP-2 recognizes Y-X-X-[FILMV] (Y-X-X-Phi) and [ED]-X-X-X-L-[LI] endocytosis signal motifs within the cytosolic tails of transmembrane cargo molecules. AP-2 may also play a role in maintaining normal post-endocytic trafficking through the ARF6-regulated, non-clathrin pathway. The AP-2 alpha subunit binds polyphosphoinositide-containing lipids, positioning AP-2 on the membrane. During long-term potentiation in hippocampal neurons, AP-2 is responsible for the endocytosis of ADAM10. The AP-2 alpha subunit acts via its C-terminal appendage domain as a scaffolding platform for endocytic accessory proteins. The AP-2 alpha and AP-2 sigma subunits are thought to contribute to the recognition of the [ED]-X-X-X-L-[LI] motif. The polypeptide is AP-2 complex subunit alpha-1 (Ap2a1) (Mus musculus (Mouse)).